Reading from the N-terminus, the 62-residue chain is Temporin-La (62 aa).

An N-terminal signal peptide occupies residues 1-22; sequence MFPLKKSLLLLFFLGTINLSFC. Positions 23 to 47 are excised as a propeptide; that stretch reads EEERDVDQDERRDDPGERNVQVEKR. A Leucine amide modification is found at Leu60.

Belongs to the frog skin active peptide (FSAP) family. Temporin subfamily. In terms of tissue distribution, expressed by the skin glands.

The protein localises to the secreted. It localises to the target cell membrane. Antimicrobial peptide with amphipathic alpha-helical structure that acts against both Gram-positive and Gram-negative bacteria and the fungus Candida albicans. Is active against S.aureus ATCC 25923 (MIC=2.5 ug/ml), S.suis 2 CVCC 606 (MIC=15.6 ug/ml), Salmonella ATCC 20020 (MIC=15.6 ug/ml), P.aeruginosa ATCC 227853 (MIC=60 ug/ml), and C.albicans ATCC10231 (MIC=31.25 ug/ml). Is not active against B.subtilis ADB403, E.coli ATCC 25922, and K.pneumoniae ATCC 700603. Also shows a strong antitumor activity, but no hemolytic activity. The chain is Temporin-La from Aquarana catesbeiana (American bullfrog).